The chain runs to 179 residues: Interleukin-22 (179 aa).

An N-terminal signal peptide occupies residues 1–33; sequence MAALQKSVSSFLMGTLATSCLLLLALLVQGGAA. 2 disulfide bridges follow: Cys40/Cys132 and Cys89/Cys178. 3 N-linked (GlcNAc...) asparagine glycosylation sites follow: Asn54, Asn68, and Asn97.

Belongs to the IL-10 family.

The protein localises to the secreted. In terms of biological role, cytokine that plays a critical role in modulating tissue responses during inflammation. Plays an essential role in the regeneration of epithelial cells to maintain barrier function after injury and for the prevention of further tissue damage. Unlike most of the cytokines, has no effect on immune cells. Signals through a heterodimeric receptor composed of two subunits, the specific receptor IL22RA1 which is present on non-immune cells in many organs and the shared subunit IL10RB. Ligation of IL22RA1 with IL22 induces activation of the tyrosine kinases JAK1 and TYK2, which in turn activates STAT3. In turn, promotes cell survival and proliferation through STAT3, ERK1/2 and PI3K/AKT pathways. Promotes phosphorylation of GSK3B at 'Ser-9' and CTTN. Promotes epithelial cell spreading. This is Interleukin-22 (IL22) from Homo sapiens (Human).